A 317-amino-acid chain; its full sequence is Porphobilinogen deaminase (317 aa).

Cys245 is subject to S-(dipyrrolylmethanemethyl)cysteine.

The protein belongs to the HMBS family. Monomer. Dipyrromethane serves as cofactor.

It catalyses the reaction 4 porphobilinogen + H2O = hydroxymethylbilane + 4 NH4(+). Its pathway is porphyrin-containing compound metabolism; protoporphyrin-IX biosynthesis; coproporphyrinogen-III from 5-aminolevulinate: step 2/4. It functions in the pathway porphyrin-containing compound metabolism; chlorophyll biosynthesis. In terms of biological role, tetrapolymerization of the monopyrrole PBG into the hydroxymethylbilane pre-uroporphyrinogen in several discrete steps. This chain is Porphobilinogen deaminase, found in Synechococcus sp. (strain CC9605).